We begin with the raw amino-acid sequence, 357 residues long: 4-hydroxymandelate synthase (357 aa).

2 VOC domains span residues 5-129 (EIDY…LIQR) and 158-309 (GIDH…IFTA). Fe cation is bound at residue histidine 161. The substrate site is built by histidine 161, serine 201, threonine 214, histidine 241, and glutamine 305. Fe cation is bound at residue histidine 241. A Fe cation-binding site is contributed by glutamate 320.

It belongs to the 4HPPD family. Monomer. It depends on Fe cation as a cofactor.

It carries out the reaction 3-(4-hydroxyphenyl)pyruvate + O2 = (S)-4-hydroxymandelate + CO2. It functions in the pathway antibiotic biosynthesis; vancomycin biosynthesis. Functionally, required to synthesize hydroxyphenylglycine, a recurring skeletal component of nonproteinogenic macrocyclic peptide antibiotics such as vancomycin. Catalyzes the conversion of p-hydroxyphenylpyruvate to p-hydroxymandelate. The decarboxylation and hydroxylation activities of HmaS show novel and distinct regioselectivity, compared to all other known p-hydroxyphenylpyruvate dioxygenases, by hydroxylating the benzylic position of the substrate instead of the phenyl ring. This Amycolatopsis orientalis (Nocardia orientalis) protein is 4-hydroxymandelate synthase.